Reading from the N-terminus, the 594-residue chain is UvrABC system protein C (594 aa).

Positions Asp14–Ile91 constitute a GIY-YIG domain. The 36-residue stretch at Asp196 to Met231 folds into the UVR domain.

Belongs to the UvrC family. Interacts with UvrB in an incision complex.

The protein localises to the cytoplasm. Functionally, the UvrABC repair system catalyzes the recognition and processing of DNA lesions. UvrC both incises the 5' and 3' sides of the lesion. The N-terminal half is responsible for the 3' incision and the C-terminal half is responsible for the 5' incision. The sequence is that of UvrABC system protein C from Streptococcus equi subsp. zooepidemicus (strain MGCS10565).